A 314-amino-acid polypeptide reads, in one-letter code: Methionyl-tRNA formyltransferase (314 aa).

Residue 112-115 participates in (6S)-5,6,7,8-tetrahydrofolate binding; that stretch reads SLLP.

The protein belongs to the Fmt family.

The enzyme catalyses L-methionyl-tRNA(fMet) + (6R)-10-formyltetrahydrofolate = N-formyl-L-methionyl-tRNA(fMet) + (6S)-5,6,7,8-tetrahydrofolate + H(+). In terms of biological role, attaches a formyl group to the free amino group of methionyl-tRNA(fMet). The formyl group appears to play a dual role in the initiator identity of N-formylmethionyl-tRNA by promoting its recognition by IF2 and preventing the misappropriation of this tRNA by the elongation apparatus. The chain is Methionyl-tRNA formyltransferase from Buchnera aphidicola subsp. Acyrthosiphon pisum (strain 5A).